Consider the following 453-residue polypeptide: Pup--protein ligase (453 aa).

Glutamate 9 contacts Mg(2+). Residue arginine 53 coordinates ATP. Position 55 (tyrosine 55) interacts with Mg(2+). The active-site Proton acceptor is the aspartate 57. Glutamate 63 contacts Mg(2+). Positions 66 and 420 each coordinate ATP.

It belongs to the Pup ligase/Pup deamidase family. Pup-conjugating enzyme subfamily.

The catalysed reaction is ATP + [prokaryotic ubiquitin-like protein]-L-glutamate + [protein]-L-lysine = ADP + phosphate + N(6)-([prokaryotic ubiquitin-like protein]-gamma-L-glutamyl)-[protein]-L-lysine.. Its pathway is protein degradation; proteasomal Pup-dependent pathway. It functions in the pathway protein modification; protein pupylation. In terms of biological role, catalyzes the covalent attachment of the prokaryotic ubiquitin-like protein modifier Pup to the proteasomal substrate proteins, thereby targeting them for proteasomal degradation. This tagging system is termed pupylation. The ligation reaction involves the side-chain carboxylate of the C-terminal glutamate of Pup and the side-chain amino group of a substrate lysine. This Nocardioides sp. (strain ATCC BAA-499 / JS614) protein is Pup--protein ligase.